Here is an 82-residue protein sequence, read N- to C-terminus: Escargot/snail protein homolog (82 aa).

4 consecutive C2H2-type zinc fingers follow at residues H1–H5, F18–H40, C44–H66, and F72–V82.

The protein belongs to the snail C2H2-type zinc-finger protein family.

It localises to the nucleus. This is Escargot/snail protein homolog from Calliphora vicina (Blue blowfly).